Reading from the N-terminus, the 84-residue chain is Cell division topological specificity factor (84 aa).

This sequence belongs to the MinE family.

Prevents the cell division inhibition by proteins MinC and MinD at internal division sites while permitting inhibition at polar sites. This ensures cell division at the proper site by restricting the formation of a division septum at the midpoint of the long axis of the cell. This chain is Cell division topological specificity factor, found in Ralstonia pickettii (strain 12J).